The sequence spans 162 residues: Glutathione peroxidase-like peroxiredoxin 2 (162 aa).

The active-site Cysteine sulfenic acid (-SOH) intermediate is Cys-37. Cysteines 37 and 83 form a disulfide.

It belongs to the glutathione peroxidase family. In terms of assembly, monomer.

Its subcellular location is the cytoplasm. It is found in the nucleus. The protein localises to the mitochondrion outer membrane. It localises to the mitochondrion inner membrane. The catalysed reaction is a hydroperoxide + [thioredoxin]-dithiol = an alcohol + [thioredoxin]-disulfide + H2O. In terms of biological role, glutathione peroxidase-like protein that protects cells from phospholipid hydroperoxides and nonphospholipid peroxides during oxidative stress. Plays an important role in the oxidative stress-induced response in the presence of Ca(2+). Has peroxidase activity using preferentially thioredoxin as a reducing power. The redox state of the mitochondrial GPX2 is regulated by TRX1 and TRX2 (cytoplasmic thioredoxin), and by TRX3 (mitochondrial matrix thioredoxin). Involved in sporulation. The sequence is that of Glutathione peroxidase-like peroxiredoxin 2 from Saccharomyces cerevisiae (strain ATCC 204508 / S288c) (Baker's yeast).